The primary structure comprises 506 residues: Dipeptide and tripeptide permease A (506 aa).

Topologically, residues 1–36 (MSTANNNSESTESVSMNAFKQPKAFYLIFSIELWER) are cytoplasmic. Residues 37 to 57 (FGYYGLQGIMAVYLVKMLGMS) form a helical membrane-spanning segment. Residues 58–61 (ETDS) lie on the Periplasmic side of the membrane. The helical transmembrane segment at 62–82 (ITLFSSFSALVYGFVAIGGWL) threads the bilayer. The Cytoplasmic portion of the chain corresponds to 83-91 (GDKVLGTKR). 2 consecutive transmembrane segments (helical) span residues 92–112 (VIVL…YSGH) and 113–133 (SVAW…LFKA). The Cytoplasmic portion of the chain corresponds to 134-155 (NPSALLSTCYAKDDPRLDGAFT). Residues 156–176 (MYYMAVNIGSFFSMLATPVLA) traverse the membrane as a helical segment. At 177 to 180 (ANYG) the chain is on the periplasmic side. The helical transmembrane segment at 181–201 (WSVAFSLSVVGMILTLVNFMF) threads the bilayer. Topologically, residues 202-222 (CRKWVSTQGSQPDFQPINLKK) are cytoplasmic. Residues 223-243 (LVITLAGIVVLVALSTWLLHN) form a helical membrane-spanning segment. Residues 244-248 (QGVAR) are Periplasmic-facing. The helical transmembrane segment at 249 to 269 (WILTIISLAVVAIFIKEMLAV) threads the bilayer. The Cytoplasmic segment spans residues 270–276 (SGAERRK). The helical transmembrane segment at 277–297 (MIVALLLMLEAVVFFVLYNQM) threads the bilayer. The Periplasmic segment spans residues 298-322 (PTSLNFFAIRNVEHSILGFAFEPEQ). A helical membrane pass occupies residues 323–343 (YQALNPFWIMVASPLLAAVYN). Topologically, residues 344–354 (KMGDQLPMAHK) are cytoplasmic. Residues 355–375 (FAIGMVLCSGAFLVLPWGASM) form a helical membrane-spanning segment. Residues 376-385 (ANEQGIVSVN) are Periplasmic-facing. The helical transmembrane segment at 386-406 (WLILCYGLQSIGELMISGLGL) threads the bilayer. Topologically, residues 407–416 (AMVAQLVPQR) are cytoplasmic. The chain crosses the membrane as a helical span at residues 417-437 (LMGFIMGAWFLTSAGAAIIAG). The Periplasmic segment spans residues 438–461 (YVANMMAVPENVVDPHVSLEVYSN). A helical transmembrane segment spans residues 462–482 (VFMQIGIVTGIIAVLMMLTAP). Over 483–506 (KLTRMTQDVATDVPADAATTTASA) the chain is Cytoplasmic.

It belongs to the major facilitator superfamily. Proton-dependent oligopeptide transporter (POT/PTR) (TC 2.A.17) family. DtpA subfamily.

Its subcellular location is the cell inner membrane. Its function is as follows. Proton-dependent permease that transports di- and tripeptides. The chain is Dipeptide and tripeptide permease A from Pectobacterium carotovorum subsp. carotovorum (strain PC1).